Reading from the N-terminus, the 302-residue chain is Nucleotide-binding protein Bcenmc03_2806 (302 aa).

ATP is bound at residue 8 to 15 (GISGSGKS). Position 57–60 (57–60 (DARS)) interacts with GTP.

Belongs to the RapZ-like family.

Displays ATPase and GTPase activities. The protein is Nucleotide-binding protein Bcenmc03_2806 of Burkholderia orbicola (strain MC0-3).